Consider the following 593-residue polypeptide: Sodium-independent sulfate anion transporter (593 aa).

Over 1 to 34 (MAPDTCCCSATALRRRLPVLAWVPDYSLQWLRLD) the chain is Extracellular. Residues 35–55 (FIAGLSVGLTVIPQALAYAEV) form a helical membrane-spanning segment. Position 56 (Ala-56) is a topological domain, cytoplasmic. Residues 57 to 77 (GLPPQYGLYSAFMGCFVYFFL) form a helical membrane-spanning segment. Over 78–82 (GTSRD) the chain is Extracellular. The helical transmembrane segment at 83–100 (VTLGPTAIMSLLVSFYTF) threads the bilayer. Residues 101–106 (REPAYA) lie on the Cytoplasmic side of the membrane. The chain crosses the membrane as a helical span at residues 107–127 (VLLAFLSGCIQLAMGLLHLGF). Over 128-176 (LLDFISCPVIKGFTSAASITIGFGQIKNLLGLQKIPRQFFLQVYHTFLH) the chain is Extracellular. Residues 177-197 (IGETRVGDAVLGLASMLLLLV) form a helical membrane-spanning segment. Topologically, residues 198–233 (LKCMREHMPPPHPEMPLAVKFSRGLVWTVTTARNAL) are cytoplasmic. The helical transmembrane segment at 234–254 (VVSSAALIAYAFEVTGSHPFV) threads the bilayer. Residues 255–287 (LTGKIAEGLPPVRIPPFSVTRDNKTISFSEMVQ) are Extracellular-facing. The chain crosses the membrane as a helical span at residues 288 to 308 (DMGAGLAVVPLMGLLESIAVA). The Cytoplasmic portion of the chain corresponds to 309–324 (KSFASQNNYRIDANQE). A helical membrane pass occupies residues 325–345 (LLAIGLTNVLGSLVSSYPVTG). Topologically, residues 346–361 (SFGRTAVNAQTGVCTP) are extracellular. Residues 362–382 (AGGLVTGALVLLSLNYLTSLF) traverse the membrane as a helical segment. A topological domain (cytoplasmic) is located at residue Ser-383. The helical transmembrane segment at 384 to 404 (YIPKSALAAVIITAVTPLFDV) threads the bilayer. Residues 405–417 (KIFRSLWRVQRLD) are Extracellular-facing. The chain crosses the membrane as a helical span at residues 418–438 (LLPLCVTFLLSFWEIQYGILA). Residues 439–593 (GSLVSLLILL…SSLLKSPSGP (155 aa)) are Cytoplasmic-facing. Residues 453 to 566 (RPKTQVSEGQ…EEAEKFLQQE (114 aa)) form the STAS domain. Residues 564–593 (QQEPGTEPNSIHEDAVPEQRSSLLKSPSGP) are disordered. Polar residues predominate over residues 582–593 (QRSSLLKSPSGP).

Belongs to the SLC26A/SulP transporter (TC 2.A.53) family. Abundantly expressed in the cerebellum, with a predominant expression in Purkinje cells (at protein level). In terms of tissue distribution, predominantly expressed in the kidney and brain. In the kidney localizes in collecting duct intercalated cells (at protein level). As to expression, predominantly expressed in the brain with lower levels in the kidney.

It localises to the cell membrane. The protein resides in the lysosome membrane. The protein localises to the apical cell membrane. It is found in the basolateral cell membrane. It catalyses the reaction hydrogencarbonate(in) + chloride(out) = hydrogencarbonate(out) + chloride(in). It carries out the reaction sulfate(in) + H(+)(in) = sulfate(out) + H(+)(out). The enzyme catalyses oxalate(in) + chloride(out) = oxalate(out) + chloride(in). Functionally, sodium-independent anion exchanger mediating bicarbonate, chloride, sulfate and oxalate transport. Exhibits sodium-independent sulfate anion transporter activity that may cooperate with SLC26A2 to mediate DIDS-sensitive sulfate uptake into high endothelial venules endothelial cells (HEVEC). In the kidney, mediates chloride-bicarbonate exchange, facilitating V-ATPase-mediated acid secretion. May function as a chloride channel, playing an important role in moderating chloride homeostasis and neuronal activity in the cerebellum. The chain is Sodium-independent sulfate anion transporter from Mus musculus (Mouse).